Reading from the N-terminus, the 172-residue chain is Macro domain-containing protein CT2219 (172 aa).

One can recognise a Macro domain in the interval 1–172 (MPDNVLIHAI…DVYQKALAAG (172 aa)).

The protein belongs to the MacroD-type family.

The polypeptide is Macro domain-containing protein CT2219 (Chlorobaculum tepidum (strain ATCC 49652 / DSM 12025 / NBRC 103806 / TLS) (Chlorobium tepidum)).